The following is a 186-amino-acid chain: Dirigent protein 4 (186 aa).

An N-terminal signal peptide occupies residues 1 to 20 (MGKNLGLVVSFYLCITFALG). Residues Asn-67, Asn-126, Asn-169, and Asn-180 are each glycosylated (N-linked (GlcNAc...) asparagine).

The protein belongs to the plant dirigent protein family. In terms of assembly, homodimer.

Its subcellular location is the secreted. The protein localises to the extracellular space. The protein resides in the apoplast. Functionally, dirigent proteins impart stereoselectivity on the phenoxy radical-coupling reaction, yielding optically active lignans from two molecules of coniferyl alcohol in the biosynthesis of lignans, flavonolignans, and alkaloids and thus plays a central role in plant secondary metabolism. This Arabidopsis thaliana (Mouse-ear cress) protein is Dirigent protein 4 (DIR4).